A 142-amino-acid chain; its full sequence is Neuritin (142 aa).

The N-terminal stretch at 1–27 (MGLKLNGRYISLILAVQIAYLVQAVRA) is a signal peptide. Glycine 116 carries GPI-anchor amidated glycine lipidation. Positions 117 to 142 (AAGPLLPALPVLLVSLSAALATWLSF) are cleaved as a propeptide — removed in mature form.

Belongs to the neuritin family. Component of the outer core of AMPAR complex. AMPAR complex consists of an inner core made of 4 pore-forming GluA/GRIA proteins (GRIA1, GRIA2, GRIA3 and GRIA4) and 4 major auxiliary subunits arranged in a twofold symmetry. One of the two pairs of distinct binding sites is occupied either by CNIH2, CNIH3 or CACNG2, CACNG3. The other harbors CACNG2, CACNG3, CACNG4, CACNG8 or GSG1L. This inner core of AMPAR complex is complemented by outer core constituents binding directly to the GluA/GRIA proteins at sites distinct from the interaction sites of the inner core constituents. Outer core constituents include at least PRRT1, PRRT2, CKAMP44/SHISA9, FRRS1L and NRN1. The proteins of the inner and outer core serve as a platform for other, more peripherally associated AMPAR constituents. Alone or in combination, these auxiliary subunits control the gating and pharmacology of the AMPAR complex and profoundly impact their biogenesis and protein processing.

The protein resides in the cell membrane. It is found in the synapse. Its function is as follows. Promotes neurite outgrowth and especially branching of neuritic processes in primary hippocampal and cortical cells. This Bos taurus (Bovine) protein is Neuritin (NRN1).